The chain runs to 672 residues: Probable copper-transporting P-type ATPase B (672 aa).

The span at 1-17 (MEHHSHQEHENHTSHGN) shows a compositional bias: basic and acidic residues. Residues 1–22 (MEHHSHQEHENHTSHGNHEHHH) form a disordered region. Helical transmembrane passes span 30 to 50 (FFIS…MGVK), 55 to 75 (ISFT…FFYG), 93 to 113 (GMMT…LYAF), 125 to 145 (TMDF…GHWI), 282 to 302 (GYLF…WMLI), and 313 to 333 (LVTV…PLVT). The active-site 4-aspartylphosphate intermediate is aspartate 365. Residues aspartate 563 and aspartate 567 each contribute to the Mg(2+) site. Transmembrane regions (helical) follow at residues 621-643 (LWWG…ASIG) and 647-669 (SPAV…AFTL).

The protein belongs to the cation transport ATPase (P-type) (TC 3.A.3) family. Type IB subfamily.

The protein resides in the cell membrane. It carries out the reaction Cu(+)(in) + ATP + H2O = Cu(+)(out) + ADP + phosphate + H(+). In terms of biological role, involved in copper transport. The sequence is that of Probable copper-transporting P-type ATPase B (copB) from Staphylococcus aureus.